A 494-amino-acid chain; its full sequence is UPF0371 protein stu1377 (494 aa).

It belongs to the UPF0371 family.

In Streptococcus thermophilus (strain ATCC BAA-250 / LMG 18311), this protein is UPF0371 protein stu1377.